A 392-amino-acid chain; its full sequence is Potassium/proton antiporter CemA (392 aa).

Helical transmembrane passes span 174–194 (FLAS…VWWL), 269–289 (SLAN…MLSL), 316–336 (FLIL…WEVI), and 352–372 (FIFM…KYWI).

The protein belongs to the CemA family.

Its subcellular location is the plastid. It is found in the chloroplast inner membrane. It carries out the reaction K(+)(in) + H(+)(out) = K(+)(out) + H(+)(in). Its function is as follows. Contributes to K(+)/H(+) antiport activity by supporting proton efflux to control proton extrusion and homeostasis in chloroplasts in a light-dependent manner to modulate photosynthesis. Prevents excessive induction of non-photochemical quenching (NPQ) under continuous-light conditions. Indirectly promotes efficient inorganic carbon uptake into chloroplasts. The polypeptide is Potassium/proton antiporter CemA (Nephroselmis olivacea (Green alga)).